Consider the following 331-residue polypeptide: 3-dehydroquinate synthase homolog (331 aa).

Belongs to the archaeal-type DHQ synthase family.

The chain is 3-dehydroquinate synthase homolog from Persephonella marina (strain DSM 14350 / EX-H1).